A 130-amino-acid chain; its full sequence is Small ribosomal subunit protein uS9 (130 aa).

It belongs to the universal ribosomal protein uS9 family.

The sequence is that of Small ribosomal subunit protein uS9 from Streptococcus equi subsp. zooepidemicus (strain H70).